A 131-amino-acid chain; its full sequence is Large ribosomal subunit protein bL17 (131 aa).

Belongs to the bacterial ribosomal protein bL17 family. As to quaternary structure, part of the 50S ribosomal subunit. Contacts protein L32.

The polypeptide is Large ribosomal subunit protein bL17 (Herminiimonas arsenicoxydans).